The primary structure comprises 220 residues: Ribonuclease P protein component 3 (220 aa).

The protein belongs to the eukaryotic/archaeal RNase P protein component 3 family. As to quaternary structure, consists of a catalytic RNA component and at least 4-5 protein subunits.

It localises to the cytoplasm. The enzyme catalyses Endonucleolytic cleavage of RNA, removing 5'-extranucleotides from tRNA precursor.. Its function is as follows. Part of ribonuclease P, a protein complex that generates mature tRNA molecules by cleaving their 5'-ends. The sequence is that of Ribonuclease P protein component 3 from Thermococcus kodakarensis (strain ATCC BAA-918 / JCM 12380 / KOD1) (Pyrococcus kodakaraensis (strain KOD1)).